Consider the following 60-residue polypeptide: Large ribosomal subunit protein uL30 (60 aa).

The protein belongs to the universal ribosomal protein uL30 family. In terms of assembly, part of the 50S ribosomal subunit.

This Shewanella denitrificans (strain OS217 / ATCC BAA-1090 / DSM 15013) protein is Large ribosomal subunit protein uL30.